The following is a 174-amino-acid chain: ATP-dependent protease subunit HslV (174 aa).

Thr2 is a catalytic residue. Residues Gly157, Cys160, and Thr163 each coordinate Na(+).

Belongs to the peptidase T1B family. HslV subfamily. A double ring-shaped homohexamer of HslV is capped on each side by a ring-shaped HslU homohexamer. The assembly of the HslU/HslV complex is dependent on binding of ATP.

The protein resides in the cytoplasm. It carries out the reaction ATP-dependent cleavage of peptide bonds with broad specificity.. Its activity is regulated as follows. Allosterically activated by HslU binding. In terms of biological role, protease subunit of a proteasome-like degradation complex believed to be a general protein degrading machinery. The sequence is that of ATP-dependent protease subunit HslV from Shewanella frigidimarina (strain NCIMB 400).